A 2073-amino-acid polypeptide reads, in one-letter code: MAEVRKFTKRLSKPGTAAELRQSVSEAVRGSVVLEKAKLVEPLDYENVITQRKTQIYSDPLRDLLMFPMEDISISVIGRQRRTVQSTVPEDAEKRAQSLFVKECIKTYSTDWHVVNYKYEDFSGDFRMLPCKSLRPEKIPNHVFEIDEDCEKDEDSSSLCSQKGGVIKQGWLHKANVNSTITVTMKVFKRRYFYLTQLPDGSYILNSYKDEKNSKESKGCIYLDACIDVVQCPKMRRHAFELKMLDKYSHYLAAETEQEMEEWLIMLKKIIQINTDSLVQEKKDTVEAIQEEETSSQGKAENIMASLERSMHPELMKYGRETEQLNKLSRGDGRQNLFSFDSEVQRLDFSGIEPDVKPFEEKCNKRFMVNCHDLTFNILGHIGDNAKGPPTNVEPFFINLALFDVKNNCKISADFHVDLNPPSVREMLWGTSTQLSNDGNAKGFSPESLIHGIAESQLCYIKQGIFSVTNPHPEIFLVVRIEKVLQGNITHCAEPYIKNSDPIKTAQKVHRTAKQVCSRLGQYRMPFAWAARPIFKDVQGSLDLDGRFSPLYKQDSSKLSNEDILKLLSEYKKPEKTKLQIIPGQLSITVECVPVDLPNCITSSYVPLKPFEKNCQNITVEVEEFVPEMTKYCYPFTIYKNHLYVYPLQLKYDSQKSFAKARNIAVCVEFRDSDESDASALKCIYGKPAGSVFTTNAYAVVSHHNQNPEFYDEIKIELPIHLHQKHHLLFTFYHVSCEINTKGTTKKQDTVETPVGFAWVPLLKDGRVITLEQQLPVSANLPPGYLNVNDAESRRQSNADIKWVDGAKPLLKIKTHLESTIYTQDLHVHKFFHHCQLIQSGSKEVPGELIKYLKCLHAMEIQVMIQFLPVILMQLFRVLTNMTHEDDVPINCTMVLLHIVSKCHEEGLESYLRSFIKYSFRPEKPSTLQAQLIHETLATTMIAILKQSADFLAINKLLKYSWFFFEIIAKSMATYLLEENKIKLPRGQRFPEAYHHVLHSLLLAIIPHVTIRYAEIPDESRNGNYSLASFLKRCLTLMDRGFVFNLINDYISGFSPKDPKVLAEYKFEFLQTICNHEHYIPLNLPMAFAKPKLQRVQDSNLEYSLSDEYCKHHFLVGLLLRETSIALQDNYEIRYTAISVIKNLLIKHAFDTRYQHKNQQAKIAQLYLPFVGLLLENIQRLAGRDTLYSCAAMPSSASRDEFPCGFVSPTNRGSLASDKDTAYGSFQNGHGIKREDSRGSLIPEGATGFPDPGSTSENTRQSSSRSSVSQYNRLDQYEIRNLLMCYLYIVKMISEDTLLTYWNKVSPQELINILVLLEVCLFHFRYMGKRNIARVHDAWLSKHFGIDRKSQTMPALRNRSGVMQARLQHLSSLESSFTLNHSSATTEADIFHQALLEGNTATEVSLTVLDTISFFTQCFKNQLLNNDGHNPLMKKVFDIHLAFLKNGQSEVSLKHVFASLRSFISKFPSAFFKGRVNMCAAFCYEVLKCCTSKISSTRNEASALLYLLMRNNFEYTKRKTFLRTHLQIIIAVSQLIADVALSGGSRFQESLFIINNFANSDRPMKATAFPTEVKDLTKRIRTVLMATAQMKEHEKDPEMLIDLQYSLAKSYASTPELRKTWLDSMAKIHIKNGDFSEAAMCYVHVAALVAEFLHRKKLFPSGCSAFKKITPNIDEEGAMKEDAGMMDVHYSEEVLLELLEQCVDGLWKAERYEVISEISKLIIPIYEKRREFEKLTQVYRTLHGAYTKILEVMHTKKRLLGTFFRVAFYGQSFFEEEDGKEYIYKEPKLTGLSEISLRLVKLYGEKFGTENVKIIQDSDKVNAKELDPKFAHIQVTYVKPYFDDKELTERKTEFERNHNINRFVFEAPYTLSGKKQGCIEEQCKRRTILTTSNSFPYVKKRIPINCEQQVNLKPIDVATDEIKDKTAELHKLCSSVDVDMIQLQLKLQGCVSVQVNAGPLAYARAFLNESQANKYPPKKVNELKDMFRKFIQACSIALELNERLIKEDQIEYHEGLKSNFRDMVKELSDIIHEQILQEDTMHSPWMNNTLHVFCAISGTSSNRGYGSPRYAEV.

Ser-12 bears the Phosphoserine mark. Residue Thr-16 is modified to Phosphothreonine. 2 positions are modified to phosphoserine: Ser-23 and Ser-161. Positions 165–272 (GVIKQGWLHK…WLIMLKKIIQ (108 aa)) constitute a PH domain. At Tyr-248 the chain carries Phosphotyrosine. 2 positions are modified to phosphoserine: Ser-306 and Ser-445. Residues 640–818 (KNHLYVYPLQ…PLLKIKTHLE (179 aa)) form the C2 DOCK-type domain. The tract at residues 1227–1267 (QNGHGIKREDSRGSLIPEGATGFPDPGSTSENTRQSSSRSS) is disordered. A phosphoserine mark is found at Ser-1237 and Ser-1240. Low complexity predominate over residues 1254 to 1267 (STSENTRQSSSRSS). In terms of domain architecture, DOCKER spans 1609–2036 (KSYASTPELR…LSDIIHEQIL (428 aa)).

The protein belongs to the DOCK family. Interacts with CDC42. In terms of tissue distribution, expressed in spleen, thymus, mesenteric lymph nodes (MLN), bone marrow and peripheral blood lymphocytes. Enriched in B-cells from germinal centers. Expressed in B-, T- and dendritic cells as well as Purkinje cells.

Guanine nucleotide-exchange factor (GEF) that activates CDC42 by exchanging bound GDP for free GTP. Required for marginal zone (MZ) B-cell development, is associated with early bone marrow B-cell development, MZ B-cell formation, MZ B-cell number and marginal metallophilic macrophages morphology. Facilitates filopodia formation through the activation of CDC42. This is Dedicator of cytokinesis protein 11 from Mus musculus (Mouse).